Reading from the N-terminus, the 51-residue chain is Light-harvesting protein B-800/850 beta chain (51 aa).

Residues 2 to 23 (ADDANKVWPSGLTTAEAEELQK) are Cytoplasmic-facing. A helical membrane pass occupies residues 24-46 (GLVDGTRVFGVIAVLAHILAYAY). His40 lines the a bacteriochlorophyll pocket. Residues 47 to 51 (TPWLH) are Periplasmic-facing.

The protein belongs to the antenna complex beta subunit family. An alpha/beta heterodimer conjugated to 3 bacteriochlorophyll molecules. The core complex is formed by different alpha and beta chains, binding bacteriochlorophyll molecules, and arranged most probably in tetrameric structures disposed around the reaction center. The non-pigmented gamma chains may constitute additional components.

It localises to the cell inner membrane. In terms of biological role, antenna complexes are light-harvesting systems, which transfer the excitation energy to the reaction centers. This chain is Light-harvesting protein B-800/850 beta chain (pucB), found in Rubrivivax gelatinosus (Rhodocyclus gelatinosus).